Consider the following 312-residue polypeptide: Small ribosomal subunit protein uS2 (312 aa).

The interval 232–312 (RASGAAERDE…AAPEGEAAAE (81 aa)) is disordered. The span at 245-284 (REGRDDRGDRRDDRRGPRRGDRRDDRRDRGGDRGGDRRGP) shows a compositional bias: basic and acidic residues. Low complexity predominate over residues 291 to 312 (AAPVASAEPAAEAAPEGEAAAE).

The protein belongs to the universal ribosomal protein uS2 family.

In Myxococcus xanthus (strain DK1622), this protein is Small ribosomal subunit protein uS2.